Consider the following 137-residue polypeptide: Large ribosomal subunit protein uL16 (137 aa).

The protein belongs to the universal ribosomal protein uL16 family. Part of the 50S ribosomal subunit.

In terms of biological role, binds 23S rRNA and is also seen to make contacts with the A and possibly P site tRNAs. This chain is Large ribosomal subunit protein uL16, found in Rhizobium etli (strain CIAT 652).